Here is a 617-residue protein sequence, read N- to C-terminus: Chaperone protein HscA homolog (617 aa).

The disordered stretch occupies residues 1–23 (MALLQIAEPGQSSAPHEHKRAAG).

Belongs to the heat shock protein 70 family.

Functionally, chaperone involved in the maturation of iron-sulfur cluster-containing proteins. Has a low intrinsic ATPase activity which is markedly stimulated by HscB. This Vibrio vulnificus (strain YJ016) protein is Chaperone protein HscA homolog.